The sequence spans 448 residues: Trigger factor (448 aa).

Residues 162–243 (DDFAIIDIEA…VQQTKERKLP (82 aa)) form the PPIase FKBP-type domain. Residues 426-448 (DEGKAVDPSEYFGEEEESAEESE) are disordered. The segment covering 437–448 (FGEEEESAEESE) has biased composition (acidic residues).

It belongs to the FKBP-type PPIase family. Tig subfamily.

The protein localises to the cytoplasm. The enzyme catalyses [protein]-peptidylproline (omega=180) = [protein]-peptidylproline (omega=0). Functionally, involved in protein export. Acts as a chaperone by maintaining the newly synthesized protein in an open conformation. Functions as a peptidyl-prolyl cis-trans isomerase. The sequence is that of Trigger factor from Corynebacterium diphtheriae (strain ATCC 700971 / NCTC 13129 / Biotype gravis).